Here is a 30-residue protein sequence, read N- to C-terminus: Cycloviolin-C (30 aa).

Positions 1–30 (GIPCGESCVFIPCLTTVAGCSCKNKVCYRN) form a cross-link, cyclopeptide (Gly-Asn). Intrachain disulfides connect cysteine 4/cysteine 20, cysteine 8/cysteine 22, and cysteine 13/cysteine 27.

In terms of processing, this is a cyclic peptide.

In terms of biological role, probably participates in a plant defense mechanism. Has anti-HIV activity. The chain is Cycloviolin-C from Leonia cymosa (Sacha uba).